Here is a 246-residue protein sequence, read N- to C-terminus: 1-(5-phosphoribosyl)-5-[(5-phosphoribosylamino)methylideneamino] imidazole-4-carboxamide isomerase (246 aa).

Residue Asp8 is the Proton acceptor of the active site. The active-site Proton donor is Asp130.

It belongs to the HisA/HisF family.

Its subcellular location is the cytoplasm. The catalysed reaction is 1-(5-phospho-beta-D-ribosyl)-5-[(5-phospho-beta-D-ribosylamino)methylideneamino]imidazole-4-carboxamide = 5-[(5-phospho-1-deoxy-D-ribulos-1-ylimino)methylamino]-1-(5-phospho-beta-D-ribosyl)imidazole-4-carboxamide. It participates in amino-acid biosynthesis; L-histidine biosynthesis; L-histidine from 5-phospho-alpha-D-ribose 1-diphosphate: step 4/9. This Alcanivorax borkumensis (strain ATCC 700651 / DSM 11573 / NCIMB 13689 / SK2) protein is 1-(5-phosphoribosyl)-5-[(5-phosphoribosylamino)methylideneamino] imidazole-4-carboxamide isomerase.